A 357-amino-acid polypeptide reads, in one-letter code: uncharacterized protein (357 aa).

This is an uncharacterized protein from Mycobacterium bovis (strain ATCC BAA-935 / AF2122/97).